The following is a 297-amino-acid chain: Phosphatidylserine decarboxylase proenzyme (297 aa).

Residues aspartate 112, histidine 168, and serine 255 each act as charge relay system; for autoendoproteolytic cleavage activity in the active site. Residue serine 255 is the Schiff-base intermediate with substrate; via pyruvic acid; for decarboxylase activity of the active site. Position 255 is a pyruvic acid (Ser); by autocatalysis (serine 255).

The protein belongs to the phosphatidylserine decarboxylase family. PSD-B subfamily. Prokaryotic type II sub-subfamily. As to quaternary structure, heterodimer of a large membrane-associated beta subunit and a small pyruvoyl-containing alpha subunit. It depends on pyruvate as a cofactor. Post-translationally, is synthesized initially as an inactive proenzyme. Formation of the active enzyme involves a self-maturation process in which the active site pyruvoyl group is generated from an internal serine residue via an autocatalytic post-translational modification. Two non-identical subunits are generated from the proenzyme in this reaction, and the pyruvate is formed at the N-terminus of the alpha chain, which is derived from the carboxyl end of the proenzyme. The autoendoproteolytic cleavage occurs by a canonical serine protease mechanism, in which the side chain hydroxyl group of the serine supplies its oxygen atom to form the C-terminus of the beta chain, while the remainder of the serine residue undergoes an oxidative deamination to produce ammonia and the pyruvoyl prosthetic group on the alpha chain. During this reaction, the Ser that is part of the protease active site of the proenzyme becomes the pyruvoyl prosthetic group, which constitutes an essential element of the active site of the mature decarboxylase.

The protein resides in the cell membrane. It carries out the reaction a 1,2-diacyl-sn-glycero-3-phospho-L-serine + H(+) = a 1,2-diacyl-sn-glycero-3-phosphoethanolamine + CO2. It participates in phospholipid metabolism; phosphatidylethanolamine biosynthesis; phosphatidylethanolamine from CDP-diacylglycerol: step 2/2. In terms of biological role, catalyzes the formation of phosphatidylethanolamine (PtdEtn) from phosphatidylserine (PtdSer). The polypeptide is Phosphatidylserine decarboxylase proenzyme (Clostridium tetani (strain Massachusetts / E88)).